A 271-amino-acid chain; its full sequence is Putative phosphoenolpyruvate synthase regulatory protein (271 aa).

Residue 151–158 coordinates ADP; the sequence is GVSRSGKT.

Belongs to the pyruvate, phosphate/water dikinase regulatory protein family. PSRP subfamily.

It catalyses the reaction [pyruvate, water dikinase] + ADP = [pyruvate, water dikinase]-phosphate + AMP + H(+). It carries out the reaction [pyruvate, water dikinase]-phosphate + phosphate + H(+) = [pyruvate, water dikinase] + diphosphate. Bifunctional serine/threonine kinase and phosphorylase involved in the regulation of the phosphoenolpyruvate synthase (PEPS) by catalyzing its phosphorylation/dephosphorylation. The protein is Putative phosphoenolpyruvate synthase regulatory protein of Burkholderia ambifaria (strain MC40-6).